The chain runs to 414 residues: Serine hydroxymethyltransferase (414 aa).

Residues Leu116 and 120 to 122 contribute to the (6S)-5,6,7,8-tetrahydrofolate site; that span reads GHL. Lys225 carries the N6-(pyridoxal phosphate)lysine modification. (6S)-5,6,7,8-tetrahydrofolate is bound at residue 349–351; the sequence is SPF.

It belongs to the SHMT family. Homodimer. It depends on pyridoxal 5'-phosphate as a cofactor.

The protein localises to the cytoplasm. The enzyme catalyses (6R)-5,10-methylene-5,6,7,8-tetrahydrofolate + glycine + H2O = (6S)-5,6,7,8-tetrahydrofolate + L-serine. It participates in one-carbon metabolism; tetrahydrofolate interconversion. The protein operates within amino-acid biosynthesis; glycine biosynthesis; glycine from L-serine: step 1/1. Functionally, catalyzes the reversible interconversion of serine and glycine with tetrahydrofolate (THF) serving as the one-carbon carrier. This reaction serves as the major source of one-carbon groups required for the biosynthesis of purines, thymidylate, methionine, and other important biomolecules. Also exhibits THF-independent aldolase activity toward beta-hydroxyamino acids, producing glycine and aldehydes, via a retro-aldol mechanism. This Oenococcus oeni (strain ATCC BAA-331 / PSU-1) protein is Serine hydroxymethyltransferase.